The sequence spans 317 residues: Beta-ketoacyl-[acyl-carrier-protein] synthase III (317 aa).

Residues C112 and H244 contribute to the active site. Positions 245–249 are ACP-binding; the sequence is QANLR. N274 is an active-site residue.

The protein belongs to the thiolase-like superfamily. FabH family. Homodimer.

It is found in the cytoplasm. The catalysed reaction is malonyl-[ACP] + acetyl-CoA + H(+) = 3-oxobutanoyl-[ACP] + CO2 + CoA. It participates in lipid metabolism; fatty acid biosynthesis. Functionally, catalyzes the condensation reaction of fatty acid synthesis by the addition to an acyl acceptor of two carbons from malonyl-ACP. Catalyzes the first condensation reaction which initiates fatty acid synthesis and may therefore play a role in governing the total rate of fatty acid production. Possesses both acetoacetyl-ACP synthase and acetyl transacylase activities. Its substrate specificity determines the biosynthesis of branched-chain and/or straight-chain of fatty acids. The chain is Beta-ketoacyl-[acyl-carrier-protein] synthase III from Shigella sonnei (strain Ss046).